The following is a 125-amino-acid chain: Small ribosomal subunit protein bS6 (125 aa).

It belongs to the bacterial ribosomal protein bS6 family.

Binds together with bS18 to 16S ribosomal RNA. This is Small ribosomal subunit protein bS6 (rpsF) from Campylobacter jejuni subsp. jejuni serotype O:2 (strain ATCC 700819 / NCTC 11168).